The sequence spans 429 residues: MDRIRIVGGNKLNGTIPISGAKNAALPLMIAALLTEETLILDNVPRLADVAQLQRILGNHGVDIMSAGKRSGDHEYQGQTLHISAANVIDTTAPYELVSKMRASFWVIAPLLARMHETKVSLPGGCAIGTRPVDLLIMALEKLGAEVAIDGGYVIAKAPGGLTGAEVDFPKVTVSGTHVALMAATLAKGTTVITNAACEPEIVDVADCLNKMGARVSGAGTPRIVIEGVSRLGGARHTVLPDRIETGTYAMAVAMTGGDVLLRGARPELLQSALDVLTEAGAVITPNNEGIRVARNGAGINPVIVSTAPFPGFPTDLQAQLMALMTRAKGSSHITETIFENRFMHVQELARFGARIHLDGETATIEGIGILRGAPVMATDLRASVSLVIAGLAAEGETMVNRVYHLDRGFERLEEKLSGCGASIERISD.

Residue 22–23 (KN) participates in phosphoenolpyruvate binding. R102 serves as a coordination point for UDP-N-acetyl-alpha-D-glucosamine. Catalysis depends on C126, which acts as the Proton donor. At C126 the chain carries 2-(S-cysteinyl)pyruvic acid O-phosphothioketal. UDP-N-acetyl-alpha-D-glucosamine contacts are provided by residues 131–135 (RPVDL), D316, and I338.

This sequence belongs to the EPSP synthase family. MurA subfamily.

Its subcellular location is the cytoplasm. The enzyme catalyses phosphoenolpyruvate + UDP-N-acetyl-alpha-D-glucosamine = UDP-N-acetyl-3-O-(1-carboxyvinyl)-alpha-D-glucosamine + phosphate. It participates in cell wall biogenesis; peptidoglycan biosynthesis. Functionally, cell wall formation. Adds enolpyruvyl to UDP-N-acetylglucosamine. The sequence is that of UDP-N-acetylglucosamine 1-carboxyvinyltransferase from Nitrobacter hamburgensis (strain DSM 10229 / NCIMB 13809 / X14).